The following is an 82-amino-acid chain: UPF0335 protein pRhico085 (82 aa).

Belongs to the UPF0335 family.

The polypeptide is UPF0335 protein pRhico085 (Azospirillum brasilense).